A 504-amino-acid polypeptide reads, in one-letter code: 2,3-bisphosphoglycerate-independent phosphoglycerate mutase (504 aa).

Mn(2+) contacts are provided by D9 and S59. Catalysis depends on S59, which acts as the Phosphoserine intermediate. Residues H120, R149–D150, R181, R187, R253–R256, and K326 contribute to the substrate site. Mn(2+) contacts are provided by D393, H397, D434, H435, and H451.

This sequence belongs to the BPG-independent phosphoglycerate mutase family. The cofactor is Mn(2+).

It catalyses the reaction (2R)-2-phosphoglycerate = (2R)-3-phosphoglycerate. It participates in carbohydrate degradation; glycolysis; pyruvate from D-glyceraldehyde 3-phosphate: step 3/5. Functionally, catalyzes the interconversion of 2-phosphoglycerate and 3-phosphoglycerate. In Haloquadratum walsbyi (strain DSM 16790 / HBSQ001), this protein is 2,3-bisphosphoglycerate-independent phosphoglycerate mutase.